The primary structure comprises 367 residues: MASQSVAGIGGRTAAGEARAASPESRRMVAIWLFVSFALIVEMFGIGAYVQNMNAGLSIMAWQPVSGVIPPLTHAAWERMFALYKTIPQYKELNRGMDLAGFKAIFWPEWIHRMWGRLLGFDFGVPLVWFLWTGRIERRLRPWLVTLFVLGGVQGLIGWWMVASGFQPGLTEVSVFRLSVHYCFATLLAIAVFATALTVLKPAETRLPPEEAARYAGARRMAMGSIVLISIAIVAGTFLSGTHAYTIDNTFPLMQGRWVPPDYAALHPFWKNFFLNKAATQFDHRLLGTVAAVGVLAAVVAAIRADLPARARDAFLVMGALLIVQYILGVTTLVSKILDIGIVHQLNAVLLLAAAVWAWFELRGRPA.

A run of 5 helical transmembrane segments spans residues 28 to 48 (MVAI…GIGA), 114 to 134 (MWGR…LWTG), 143 to 163 (WLVT…WMVA), 180 to 200 (VHYC…LTVL), and 221 to 241 (MAMG…FLSG). Histidine 284 is a binding site for heme. The next 3 membrane-spanning stretches (helical) occupy residues 286 to 306 (LLGT…IRAD), 314 to 334 (AFLV…TTLV), and 340 to 360 (IGIV…WAWF). Position 344 (histidine 344) interacts with heme.

This sequence belongs to the COX15/CtaA family. Type 2 subfamily. Interacts with CtaB. It depends on heme b as a cofactor.

It localises to the cell membrane. The enzyme catalyses Fe(II)-heme o + 2 A + H2O = Fe(II)-heme a + 2 AH2. It participates in porphyrin-containing compound metabolism; heme A biosynthesis; heme A from heme O: step 1/1. In terms of biological role, catalyzes the conversion of heme O to heme A by two successive hydroxylations of the methyl group at C8. The first hydroxylation forms heme I, the second hydroxylation results in an unstable dihydroxymethyl group, which spontaneously dehydrates, resulting in the formyl group of heme A. This chain is Heme A synthase 2, found in Acidiphilium cryptum (strain JF-5).